A 351-amino-acid chain; its full sequence is Homeobox protein rough sheath 1 (351 aa).

Disordered stretches follow at residues 1–23, 57–82, and 187–229; these read MDQS…NSKA, AAAP…GAEM, and GGGS…PRAE. Low complexity predominate over residues 57–68; that stretch reads AAAPSSSQQHQQ. Positions 214–229 are enriched in basic and acidic residues; it reads PNGRENDPPEIDPRAE. Residues 232–252 enclose the ELK domain; the sequence is ELKYQLLKKYSGYLSSLRQEF. The homeobox; TALE-type DNA-binding region spans 253–316; the sequence is SKKKKKGKLP…NQRKRHWKPS (64 aa).

This sequence belongs to the TALE/KNOX homeobox family.

The protein localises to the nucleus. Plays a possible role in patterning the placement of lateral organs along the axis of the shoot. Mutations in RS1 alters cell fate and causes unregulated cell division and expansion in the leaf. Probably binds to the DNA sequence 5'-TGAC-3'. In Zea mays (Maize), this protein is Homeobox protein rough sheath 1 (RS1).